A 683-amino-acid chain; its full sequence is DNA ligase (683 aa).

Residues 29–33 (DAEFD), 79–80 (SL), and Glu109 contribute to the NAD(+) site. The N6-AMP-lysine intermediate role is filled by Lys111. 4 residues coordinate NAD(+): Arg132, Glu172, Lys288, and Lys312. Zn(2+) contacts are provided by Cys406, Cys409, Cys425, and Cys431. The 89-residue stretch at 595 to 683 (SVPRTLAGVT…GPPAEAGEPT (89 aa)) folds into the BRCT domain.

The protein belongs to the NAD-dependent DNA ligase family. LigA subfamily. The cofactor is Mg(2+). It depends on Mn(2+) as a cofactor.

It catalyses the reaction NAD(+) + (deoxyribonucleotide)n-3'-hydroxyl + 5'-phospho-(deoxyribonucleotide)m = (deoxyribonucleotide)n+m + AMP + beta-nicotinamide D-nucleotide.. Its function is as follows. DNA ligase that catalyzes the formation of phosphodiester linkages between 5'-phosphoryl and 3'-hydroxyl groups in double-stranded DNA using NAD as a coenzyme and as the energy source for the reaction. It is essential for DNA replication and repair of damaged DNA. This Mycobacterium ulcerans (strain Agy99) protein is DNA ligase.